A 423-amino-acid polypeptide reads, in one-letter code: Dihydrolipoyllysine-residue succinyltransferase component of 2-oxoglutarate dehydrogenase complex (423 aa).

The Lipoyl-binding domain occupies 1–76; it reads MPEVKVPELA…EVGQAIAVIG (76 aa). Lys42 bears the N6-lipoyllysine mark. Residues 76-185 form a disordered region; the sequence is GEGSGNASKE…APAKEEKKYN (110 aa). Over residues 80–96 the composition is skewed to polar residues; that stretch reads GNASKENSNDNTPQQND. Positions 99–115 are enriched in basic and acidic residues; sequence TNNKKEETTNKSADKAE. The segment covering 116–131 has biased composition (polar residues); sequence VNQTNDDNQQRVNATP. The 37-residue stretch at 128 to 164 folds into the Peripheral subunit-binding (PSBD) domain; sequence NATPSARRYARENGVNLAEVSPKTNDVVRKEDIDKKQ. Positions 153 to 164 are enriched in basic and acidic residues; it reads DVVRKEDIDKKQ. The segment covering 165 to 177 has biased composition (low complexity); it reads QAPASTQTTQQAP. Catalysis depends on residues His394 and Asp398.

Belongs to the 2-oxoacid dehydrogenase family. Forms a 24-polypeptide structural core with octahedral symmetry. Part of the 2-oxoglutarate dehydrogenase (OGDH) complex composed of E1 (2-oxoglutarate dehydrogenase), E2 (dihydrolipoamide succinyltransferase) and E3 (dihydrolipoamide dehydrogenase); the complex contains multiple copies of the three enzymatic components (E1, E2 and E3). (R)-lipoate serves as cofactor.

It carries out the reaction N(6)-[(R)-dihydrolipoyl]-L-lysyl-[protein] + succinyl-CoA = N(6)-[(R)-S(8)-succinyldihydrolipoyl]-L-lysyl-[protein] + CoA. Its pathway is amino-acid degradation; L-lysine degradation via saccharopine pathway; glutaryl-CoA from L-lysine: step 6/6. E2 component of the 2-oxoglutarate dehydrogenase (OGDH) complex which catalyzes the second step in the conversion of 2-oxoglutarate to succinyl-CoA and CO(2). This is Dihydrolipoyllysine-residue succinyltransferase component of 2-oxoglutarate dehydrogenase complex (odhB) from Staphylococcus aureus (strain MRSA252).